The chain runs to 324 residues: Acetyl-coenzyme A carboxylase carboxyl transferase subunit beta (324 aa).

Low complexity predominate over residues 1-16 (MTKNNNDLSNSSSNPP). The segment at 1-51 (MTKNNNDLSNSSSNPPSNRPVAGKEAELEIQRETHAAQSGQSESWLSRPIP) is disordered. Residues 22 to 35 (AGKEAELEIQRETH) show a composition bias toward basic and acidic residues. The segment covering 36–45 (AAQSGQSESW) has biased composition (polar residues). A CoA carboxyltransferase N-terminal domain is found at 68–324 (PSTECPQCHS…YRLLAKLTHV (257 aa)). Zn(2+) is bound by residues C72, C75, C91, and C94. The C4-type zinc finger occupies 72 to 94 (CPQCHSMITNTALIFNAYVCPHC).

This sequence belongs to the AccD/PCCB family. Acetyl-CoA carboxylase is a heterohexamer composed of biotin carboxyl carrier protein (AccB), biotin carboxylase (AccC) and two subunits each of ACCase subunit alpha (AccA) and ACCase subunit beta (AccD). Requires Zn(2+) as cofactor.

It localises to the cytoplasm. The enzyme catalyses N(6)-carboxybiotinyl-L-lysyl-[protein] + acetyl-CoA = N(6)-biotinyl-L-lysyl-[protein] + malonyl-CoA. Its pathway is lipid metabolism; malonyl-CoA biosynthesis; malonyl-CoA from acetyl-CoA: step 1/1. Component of the acetyl coenzyme A carboxylase (ACC) complex. Biotin carboxylase (BC) catalyzes the carboxylation of biotin on its carrier protein (BCCP) and then the CO(2) group is transferred by the transcarboxylase to acetyl-CoA to form malonyl-CoA. This Psychrobacter sp. (strain PRwf-1) protein is Acetyl-coenzyme A carboxylase carboxyl transferase subunit beta.